Reading from the N-terminus, the 298-residue chain is Transcription factor SRM1 (298 aa).

Positions 7 to 62 (SDGSVWSREDDIAFERALANNTDESEERWEKIAADVPGKSVEQIKEHYELLVEDVT) constitute an SANT domain. Positions 68-118 (CVPLPAYGSPEGSNGHAGDEGASSKKGGNSHAGESNQAGKSKSDQERRKGI) are disordered. The span at 108 to 118 (SKSDQERRKGI) shows a compositional bias: basic and acidic residues. One can recognise an HTH myb-type domain in the interval 111-168 (DQERRKGIAWTEDEHRLFLLGLDKYGKGDWRSISRNFVVTRTPTQVASHAQKYFIRLN). The segment at residues 140–164 (WRSISRNFVVTRTPTQVASHAQKYF) is a DNA-binding region (H-T-H motif). Over residues 182 to 200 (ITSVGNADVSTPQGPITGQ) the composition is skewed to polar residues. The tract at residues 182–245 (ITSVGNADVS…GPPMYGTPAI (64 aa)) is disordered. Over residues 201 to 215 (NNSNNNNNNNNNNSS) the composition is skewed to low complexity.

As to expression, expressed in young seedlings, developing leaves, sepals and trichomes.

The protein resides in the nucleus. Functionally, transcription activator that coordinates abscisic acid (ABA) biosynthesis and signaling-related genes via binding to the specific promoter motif 5'-(A/T)AACCAT-3'. Represses ABA-mediated salt (e.g. NaCl and KCl) stress tolerance. Regulates leaf shape and promotes vegetative growth. This chain is Transcription factor SRM1, found in Arabidopsis thaliana (Mouse-ear cress).